Consider the following 101-residue polypeptide: NAD(P)H-quinone oxidoreductase subunit 4L, chloroplastic (101 aa).

A run of 3 helical transmembrane segments spans residues Met-2–Ile-22, Met-32–Phe-52, and Ile-61–Val-81.

The protein belongs to the complex I subunit 4L family. In terms of assembly, NDH is composed of at least 16 different subunits, 5 of which are encoded in the nucleus.

It is found in the plastid. Its subcellular location is the chloroplast thylakoid membrane. It carries out the reaction a plastoquinone + NADH + (n+1) H(+)(in) = a plastoquinol + NAD(+) + n H(+)(out). The catalysed reaction is a plastoquinone + NADPH + (n+1) H(+)(in) = a plastoquinol + NADP(+) + n H(+)(out). Functionally, NDH shuttles electrons from NAD(P)H:plastoquinone, via FMN and iron-sulfur (Fe-S) centers, to quinones in the photosynthetic chain and possibly in a chloroplast respiratory chain. The immediate electron acceptor for the enzyme in this species is believed to be plastoquinone. Couples the redox reaction to proton translocation, and thus conserves the redox energy in a proton gradient. The polypeptide is NAD(P)H-quinone oxidoreductase subunit 4L, chloroplastic (Cicer arietinum (Chickpea)).